The chain runs to 94 residues: MLKPLENRVVLRVKEEEEKSMGGIVLTSASQEKPQTAEVIAVGEGKTTNHGTLISPLVKVGDTVIFEKFSGTTVKMDGEEFLILKDSDLLAIVE.

The protein belongs to the GroES chaperonin family. As to quaternary structure, heptamer of 7 subunits arranged in a ring. Interacts with the chaperonin GroEL.

Its subcellular location is the cytoplasm. Its function is as follows. Together with the chaperonin GroEL, plays an essential role in assisting protein folding. The GroEL-GroES system forms a nano-cage that allows encapsulation of the non-native substrate proteins and provides a physical environment optimized to promote and accelerate protein folding. GroES binds to the apical surface of the GroEL ring, thereby capping the opening of the GroEL channel. This is Co-chaperonin GroES from Lactococcus lactis subsp. cremoris (strain SK11).